Consider the following 370-residue polypeptide: Chorismate synthase (370 aa).

Arg-48 and Arg-54 together coordinate NADP(+). FMN is bound by residues 130-132 (RSS), 242-243 (NA), Gly-287, 302-306 (KPTSS), and Arg-328.

Belongs to the chorismate synthase family. As to quaternary structure, homotetramer. Requires FMNH2 as cofactor.

The enzyme catalyses 5-O-(1-carboxyvinyl)-3-phosphoshikimate = chorismate + phosphate. Its pathway is metabolic intermediate biosynthesis; chorismate biosynthesis; chorismate from D-erythrose 4-phosphate and phosphoenolpyruvate: step 7/7. Functionally, catalyzes the anti-1,4-elimination of the C-3 phosphate and the C-6 proR hydrogen from 5-enolpyruvylshikimate-3-phosphate (EPSP) to yield chorismate, which is the branch point compound that serves as the starting substrate for the three terminal pathways of aromatic amino acid biosynthesis. This reaction introduces a second double bond into the aromatic ring system. The chain is Chorismate synthase from Xanthobacter autotrophicus (strain ATCC BAA-1158 / Py2).